Here is a 456-residue protein sequence, read N- to C-terminus: Histidine--tRNA ligase (456 aa).

The interval 1 to 20 (MTQSENVAAAGGAKTEPKVR) is disordered.

Belongs to the class-II aminoacyl-tRNA synthetase family. As to quaternary structure, homodimer.

Its subcellular location is the cytoplasm. It carries out the reaction tRNA(His) + L-histidine + ATP = L-histidyl-tRNA(His) + AMP + diphosphate + H(+). This Cupriavidus necator (strain ATCC 17699 / DSM 428 / KCTC 22496 / NCIMB 10442 / H16 / Stanier 337) (Ralstonia eutropha) protein is Histidine--tRNA ligase.